The following is a 391-amino-acid chain: Glycosyltransferase afumC (391 aa).

This sequence belongs to the afumC glycosyltransferase family.

Its pathway is secondary metabolite biosynthesis. Its activity is regulated as follows. Activity is significantly decreased by addition of divalent cations such as Mg(2+), Mn(2+), Zn(2+), Ca(2+), Co(2+), Cu(2+), and Ni(2+); while Fe(2+) has little effect. Its function is as follows. Glycosyltransferase; part of the gene cluster that mediates the biosynthesis fumihopaside A, a hopane-type glucoside that enhances the thermotolerance and UV resistance of N.fumigata. The first step of fumihopaside A biosynthesis is performed by the squalene hopane cyclase afumA that catalyzes the cyclization of 3S-oxidosqualene into the hopene 21-beta-H-hopane-3-beta,22-diol. The cytochrome P450 monooxygenase afumB is responsible for both hydroxylation at C-24 and oxidations at C-30 of the afumA product. The glycosyltransferase afumC then catalyzes the glycosylation at C-24, using UDP-D-glucose as a donor, to produce fumihopaside A. AfumC is also able to accept UDP-D-galactose and UDP-D-glucuronic acid as donors to yield minor derivatives. Fumihopaside B, another minor derivative produced, is different from fumihopaside A due to the presence of a double bond between C-22 and C-29. The chain is Glycosyltransferase afumC from Aspergillus fumigatus (strain CBS 144.89 / FGSC A1163 / CEA10) (Neosartorya fumigata).